Reading from the N-terminus, the 140-residue chain is ATP synthase epsilon chain 1 (140 aa).

This sequence belongs to the ATPase epsilon chain family. In terms of assembly, F-type ATPases have 2 components, CF(1) - the catalytic core - and CF(0) - the membrane proton channel. CF(1) has five subunits: alpha(3), beta(3), gamma(1), delta(1), epsilon(1). CF(0) has three main subunits: a, b and c.

The protein localises to the cell inner membrane. Functionally, produces ATP from ADP in the presence of a proton gradient across the membrane. The sequence is that of ATP synthase epsilon chain 1 from Photobacterium profundum (strain SS9).